The primary structure comprises 271 residues: Urease accessory protein UreD (271 aa).

The protein belongs to the UreD family. In terms of assembly, ureD, UreF and UreG form a complex that acts as a GTP-hydrolysis-dependent molecular chaperone, activating the urease apoprotein by helping to assemble the nickel containing metallocenter of UreC. The UreE protein probably delivers the nickel.

Its subcellular location is the cytoplasm. Required for maturation of urease via the functional incorporation of the urease nickel metallocenter. This Halalkalibacterium halodurans (strain ATCC BAA-125 / DSM 18197 / FERM 7344 / JCM 9153 / C-125) (Bacillus halodurans) protein is Urease accessory protein UreD.